A 251-amino-acid chain; its full sequence is Triosephosphate isomerase (251 aa).

Residue 9-11 participates in substrate binding; that stretch reads NWK. Catalysis depends on H95, which acts as the Electrophile. The Proton acceptor role is filled by E167. Substrate-binding positions include G173, S213, and 234-235; that span reads GG.

The protein belongs to the triosephosphate isomerase family. In terms of assembly, homodimer.

It localises to the cytoplasm. The catalysed reaction is D-glyceraldehyde 3-phosphate = dihydroxyacetone phosphate. The protein operates within carbohydrate biosynthesis; gluconeogenesis. It functions in the pathway carbohydrate degradation; glycolysis; D-glyceraldehyde 3-phosphate from glycerone phosphate: step 1/1. Functionally, involved in the gluconeogenesis. Catalyzes stereospecifically the conversion of dihydroxyacetone phosphate (DHAP) to D-glyceraldehyde-3-phosphate (G3P). The polypeptide is Triosephosphate isomerase (Trichlorobacter lovleyi (strain ATCC BAA-1151 / DSM 17278 / SZ) (Geobacter lovleyi)).